The following is a 175-amino-acid chain: Large ribosomal subunit protein uL10 (175 aa).

It belongs to the universal ribosomal protein uL10 family. In terms of assembly, part of the ribosomal stalk of the 50S ribosomal subunit. The N-terminus interacts with L11 and the large rRNA to form the base of the stalk. The C-terminus forms an elongated spine to which L12 dimers bind in a sequential fashion forming a multimeric L10(L12)X complex.

In terms of biological role, forms part of the ribosomal stalk, playing a central role in the interaction of the ribosome with GTP-bound translation factors. In Synechococcus elongatus (strain ATCC 33912 / PCC 7942 / FACHB-805) (Anacystis nidulans R2), this protein is Large ribosomal subunit protein uL10.